The following is a 507-amino-acid chain: MVTIQADEISNLIRERIEQYNREVNIVNTGTVLQVGDGIARIYGLDEVMAGELVEFEEGTIGIALNLESKNVGVVLMGDGLMIQEGSSVKATARIAQIPVGEAYLGRVINALANPIDGRGEISASGFRLIESPAPGIISRRSVYEPLQTGLIAIDSMIPIGRGQRELIIGDRQTGKTAVATDTILNQQGQNVICVYVAIGQKASSVAQVVNTLQERGAMEYTIVVAETADSPATLQYLAPYTGAALAEYFMYRERHTLIIYDDLSKQAQAYRQMSLLLRRPPGREAYPGDVFYLHSRLLERAAKSSSKLGEGSMTALPIVETQSGDVSAYIPTNVISITDGQIFLSADLFNAGIRPAINVGISVSRVGSAAQIKAMKQVAGKLKLELAQFAELEAFAQFASDLDKASQNQLARGQRLRELLKQSQSAPLTVAEQIITIFTGINGYLDSLELGQVKKFIVELRTYLKTNKPRFEEIISSTKIFTEEAEALLKEAIRDQMDRFLLQQQV.

170-177 (GDRQTGKT) contributes to the ATP binding site.

The protein belongs to the ATPase alpha/beta chains family. As to quaternary structure, F-type ATPases have 2 components, CF(1) - the catalytic core - and CF(0) - the membrane proton channel. CF(1) has five subunits: alpha(3), beta(3), gamma(1), delta(1), epsilon(1). CF(0) has four main subunits: a, b, b' and c.

The protein resides in the plastid. The protein localises to the chloroplast thylakoid membrane. The enzyme catalyses ATP + H2O + 4 H(+)(in) = ADP + phosphate + 5 H(+)(out). In terms of biological role, produces ATP from ADP in the presence of a proton gradient across the membrane. The alpha chain is a regulatory subunit. This is ATP synthase subunit alpha, chloroplastic from Ipomoea purpurea (Common morning glory).